The primary structure comprises 351 residues: Translation initiation factor eIF2B subunit beta (351 aa).

Belongs to the eIF-2B alpha/beta/delta subunits family. As to quaternary structure, component of the translation initiation factor 2B (eIF2B) complex which is a heterodecamer of two sets of five different subunits: alpha, beta, gamma, delta and epsilon. Subunits alpha, beta and delta comprise a regulatory subcomplex and subunits epsilon and gamma comprise a catalytic subcomplex. Within the complex, the hexameric regulatory complex resides at the center, with the two heterodimeric catalytic subcomplexes bound on opposite sides.

Its subcellular location is the cytoplasm. It is found in the cytosol. Activated by the chemical integrated stress response (ISR) inhibitor ISRIB which stimulates guanine nucleotide exchange factor activity for both phosphorylated and unphosphorylated eIF2. In terms of biological role, acts as a component of the translation initiation factor 2B (eIF2B) complex, which catalyzes the exchange of GDP for GTP on eukaryotic initiation factor 2 (eIF2) gamma subunit. Its guanine nucleotide exchange factor activity is repressed when bound to eIF2 complex phosphorylated on the alpha subunit, thereby limiting the amount of methionyl-initiator methionine tRNA available to the ribosome and consequently global translation is repressed. This chain is Translation initiation factor eIF2B subunit beta (Eif2b2), found in Rattus norvegicus (Rat).